A 115-amino-acid chain; its full sequence is Large ribosomal subunit protein bL19 (115 aa).

It belongs to the bacterial ribosomal protein bL19 family.

Functionally, this protein is located at the 30S-50S ribosomal subunit interface and may play a role in the structure and function of the aminoacyl-tRNA binding site. This chain is Large ribosomal subunit protein bL19, found in Kosmotoga olearia (strain ATCC BAA-1733 / DSM 21960 / TBF 19.5.1).